Reading from the N-terminus, the 158-residue chain is Lysozyme C (158 aa).

A signal peptide spans 1 to 18 (MRVLPLALLVGLLAVSDA). The 132-residue stretch at 19–150 (KVLGKCEFAR…DQYMAECWSR (132 aa)) folds into the C-type lysozyme domain. 4 disulfide bridges follow: Cys-24–Cys-147, Cys-46–Cys-135, Cys-80–Cys-93, and Cys-89–Cys-107. Active-site residues include Glu-51 and Asp-68.

The protein belongs to the glycosyl hydrolase 22 family. Monomer. As to expression, strongly expressed in gill and gonad, and marginally detectable in hemolymph and lymphoid organ. Not expressed in kidney, hepatopancreas or tail muscle.

The protein localises to the secreted. The enzyme catalyses Hydrolysis of (1-&gt;4)-beta-linkages between N-acetylmuramic acid and N-acetyl-D-glucosamine residues in a peptidoglycan and between N-acetyl-D-glucosamine residues in chitodextrins.. In terms of biological role, lysozymes have primarily a bacteriolytic function; those in tissues and body fluids are associated with the monocyte-macrophage system and enhance the activity of immunoagents. Has bacteriolytic activity against Gram-positive bacterium M.luteus, and Gram-negative shrimp pathogenic bacteria V.alginolyticus, V.parahaemolyticus and V.vulnificus. May play a role in host defense. This is Lysozyme C from Penaeus merguiensis (Banana prawn).